The sequence spans 142 residues: Large ribosomal subunit protein uL11 (142 aa).

Belongs to the universal ribosomal protein uL11 family. In terms of assembly, part of the ribosomal stalk of the 50S ribosomal subunit. Interacts with L10 and the large rRNA to form the base of the stalk. L10 forms an elongated spine to which L12 dimers bind in a sequential fashion forming a multimeric L10(L12)X complex. Post-translationally, one or more lysine residues are methylated.

Its function is as follows. Forms part of the ribosomal stalk which helps the ribosome interact with GTP-bound translation factors. This Brucella abortus (strain S19) protein is Large ribosomal subunit protein uL11.